Consider the following 691-residue polypeptide: Kinetochore protein NDC80 (691 aa).

Residues 1–95 (MQSSTSTDQH…LNDKSNSRNS (95 aa)) form a disordered region. Basic and acidic residues predominate over residues 10–19 (HVLHHMDPHR). Over residues 20–42 (FTSQIPTATSSQLRRRNSTNQGL) the composition is skewed to polar residues. Phosphothreonine is present on threonine 38. A compositionally biased stretch (low complexity) spans 54 to 65 (TISGTGIPTGGI). The residue at position 248 (threonine 248) is a Phosphothreonine. Coiled coils occupy residues 376 to 446 (GKLE…SIKS) and 522 to 686 (KKSI…FETE).

Belongs to the NDC80/HEC1 family. Component of the NDC80 complex, which consists of NDC80, NUF2, SPC24 and SPC25. The NDC80 complex is formed by two subcomplexes, NDC80-NUF2 and SPC24-SPC25, which are joined end-to-end through their coiled-coil domains. It has a rod-like structure with a length of 570 Angstroms and globular domains at either end. The NDC80-NUF2 globular domains are probably directed to microtubules, the SPC24-SPC25 globular domains to the centromere. NDC80 probably interacts with SMC1 and SMC2. Also interacts with KIN3. Interacts with DMC1.

The protein resides in the nucleus. It localises to the chromosome. The protein localises to the centromere. Its subcellular location is the kinetochore. Functionally, acts as a component of the essential kinetochore-associated NDC80 complex, which is involved in chromosome segregation and spindle checkpoint activity. This is Kinetochore protein NDC80 from Saccharomyces cerevisiae (strain ATCC 204508 / S288c) (Baker's yeast).